Reading from the N-terminus, the 133-residue chain is Peptide methionine sulfoxide reductase MsrB (133 aa).

In terms of domain architecture, MsrB spans 8 to 130 (LDVWRELLSD…NSASLRLKPR (123 aa)). Zn(2+)-binding residues include C47, C50, C96, and C99. The active-site Nucleophile is C119.

The protein belongs to the MsrB Met sulfoxide reductase family. It depends on Zn(2+) as a cofactor.

It catalyses the reaction L-methionyl-[protein] + [thioredoxin]-disulfide + H2O = L-methionyl-(R)-S-oxide-[protein] + [thioredoxin]-dithiol. The chain is Peptide methionine sulfoxide reductase MsrB from Azotobacter vinelandii (strain DJ / ATCC BAA-1303).